Consider the following 527-residue polypeptide: Pyruvate kinase 2, cytosolic (527 aa).

Arginine 58 contacts substrate. K(+) is bound by residues aspartate 60, serine 62, aspartate 92, and threonine 93. Aspartate 60 to tryptophan 63 contacts ATP. Position 256 (lysine 256) interacts with substrate. Glutamate 258 is a binding site for Mg(2+). The substrate site is built by glycine 281, asparagine 282, and threonine 313. Asparagine 282 provides a ligand contact to Mg(2+).

Belongs to the pyruvate kinase family. As to quaternary structure, homotetramer. Mg(2+) is required as a cofactor. Requires K(+) as cofactor.

It is found in the cytoplasm. It localises to the cytosol. It carries out the reaction pyruvate + ATP = phosphoenolpyruvate + ADP + H(+). It participates in carbohydrate degradation; glycolysis; pyruvate from D-glyceraldehyde 3-phosphate: step 5/5. Functionally, key regulatory enzyme of the glycolytic pathway that catalyzes the final step of glycolysis, converting ADP and phosphoenolpyruvate (PEP) to ATP and pyruvate by essentially irreversible transphosphorylation. The sequence is that of Pyruvate kinase 2, cytosolic from Oryza sativa subsp. indica (Rice).